The primary structure comprises 87 residues: Alpha-elapitoxin-Ls2a (87 aa).

The first 21 residues, Met-1–Thr-21, serve as a signal peptide directing secretion. 5 disulfide bridges follow: Cys-24–Cys-41, Cys-34–Cys-62, Cys-47–Cys-51, Cys-66–Cys-77, and Cys-78–Cys-83.

It belongs to the three-finger toxin family. Long-chain subfamily. Type II alpha-neurotoxin sub-subfamily. In terms of tissue distribution, expressed by the venom gland.

The protein resides in the secreted. Functionally, binds with high affinity to muscular (tested on Torpedo marmorata, Kd=1.6 nM) and neuronal (chimeric alpha-7/CHRNA7, Kd=3 nM) nicotinic acetylcholine receptor (nAChR) and inhibits acetylcholine from binding to the receptor, thereby impairing neuromuscular and neuronal transmission. Also shows a very weak inhibition on GABA(A) receptors. The toxin (10 uM) inhibits 83% of current in channels composed of alpha-1-beta-3-gamma-2 (GABRA1-GABRB3-GABRG2) subunits, 39% of current in channels composed of alpha-2-beta-2-gamma-2 (GABRA2-GABRB2-GABRG2) subunits, and 33% of current in channels composed of alpha-5-beta-2-gamma-2 (GABRA5-GABRB2-GABRG2) subunits. The protein is Alpha-elapitoxin-Ls2a of Laticauda semifasciata (Black-banded sea krait).